An 84-amino-acid polypeptide reads, in one-letter code: Metallothionein-like protein 2C (84 aa).

Belongs to the metallothionein superfamily. Type 15 family.

Its subcellular location is the cytoplasm. It localises to the cytosol. Its function is as follows. Metallothioneins have a high content of cysteine residues that bind various heavy metals. Acts as a reactive oxygen species (ROS) scavenger in the cytosol. Possesses superoxide anion and hydroxyl radical scavenging activities in vitro. Plays a role during root development, lateral root initiation and seed embryo germination, possibly by regulating levels of cytokinin. The protein is Metallothionein-like protein 2C (MT2C) of Oryza sativa subsp. indica (Rice).